The following is a 159-amino-acid chain: Small ribosomal subunit protein bS16 (159 aa).

Positions 102–119 (GIPEAAEEAPATESVAEA) are enriched in low complexity. The segment at 102–159 (GIPEAAEEAPATESVAEAEVADVPESELSEAATETAAAELSPPEAEVEKPQVEEAVEA) is disordered. A compositionally biased stretch (acidic residues) spans 120-129 (EVADVPESEL). The span at 130–145 (SEAATETAAAELSPPE) shows a compositional bias: low complexity.

The protein belongs to the bacterial ribosomal protein bS16 family.

The sequence is that of Small ribosomal subunit protein bS16 from Synechococcus sp. (strain JA-2-3B'a(2-13)) (Cyanobacteria bacterium Yellowstone B-Prime).